Consider the following 115-residue polypeptide: Large ribosomal subunit protein bL19 (115 aa).

This sequence belongs to the bacterial ribosomal protein bL19 family.

This protein is located at the 30S-50S ribosomal subunit interface and may play a role in the structure and function of the aminoacyl-tRNA binding site. In Francisella tularensis subsp. holarctica (strain FTNF002-00 / FTA), this protein is Large ribosomal subunit protein bL19.